A 459-amino-acid polypeptide reads, in one-letter code: Protein BTN1 (459 aa).

The next 11 membrane-spanning stretches (helical) occupy residues 37–57, 73–93, 102–122, 129–149, 167–187, 189–209, 240–260, 283–303, 325–342, 352–372, and 374–394; these read VSVV…YVLV, AVLL…PYFI, IAVF…APVE, LLGV…FLGL, GAGL…GLGV, GSLL…WGIL, VPAG…AATA, ALFF…YTIN, YYPF…ISRS, LYLP…HAVL, and FIPS…LGGA.

It belongs to the battenin family.

It is found in the vacuole membrane. Involved in vacuolar transport and vacuole pH homeostasis. Also required for cytokinesis. The chain is Protein BTN1 (BTN1) from Chaetomium globosum (strain ATCC 6205 / CBS 148.51 / DSM 1962 / NBRC 6347 / NRRL 1970) (Soil fungus).